A 752-amino-acid polypeptide reads, in one-letter code: Glutamate carboxypeptidase 2 (752 aa).

Residues 1 to 19 (MWNAQQDSDSAEALGRRQR) lie on the Cytoplasmic side of the membrane. Phosphoserine is present on S10. Residues 20 to 44 (WFCAGTLVLAFTGTFIIGFLFGWFI) form a helical; Signal-anchor for type II membrane protein membrane-spanning segment. Residues 45 to 752 (KPSNDSTSSV…AAAETLREVD (708 aa)) are Extracellular-facing. Residues N48, N78, N123, N155, and N197 are each glycosylated (N-linked (GlcNAc...) asparagine). R212 and N259 together coordinate substrate. The Ca(2+) site is built by T271 and Y274. The tract at residues 276 to 589 (ANEYAYRHEF…QVRGAMVFEL (314 aa)) is NAALADase. N-linked (GlcNAc...) asparagine glycosylation is present at N338. Residues H379 and D389 each coordinate Zn(2+). E426 provides a ligand contact to substrate. The Nucleophile; for NAALADase activity role is filled by E426. E427 contacts Zn(2+). Residues E435 and E438 each coordinate Ca(2+). D455 serves as a coordination point for Zn(2+). N-linked (GlcNAc...) asparagine glycans are attached at residues N461 and N478. Substrate contacts are provided by residues 519–520 (SG), N521, 536–538 (RAR), Y554, and 554–555 (YH). H555 serves as a coordination point for Zn(2+). An N-linked (GlcNAc...) asparagine glycan is attached at N615. The active-site Charge relay system is the S630. N640 carries N-linked (GlcNAc...) asparagine glycosylation. Active-site charge relay system residues include D668 and H691. Position 701–702 (701–702 (KY)) interacts with substrate.

This sequence belongs to the peptidase M28 family. M28B subfamily. Homodimer. It depends on Zn(2+) as a cofactor. In terms of tissue distribution, widely expressed throughout brain regions with highest levels in the hippocampus, dentate gyrus, priform cortex, choroid plexus of ventricles, pineal gland, anterior lobe of the pituitary gland and supraoptic nucleus. High levels also found in the cerebral cortex, substantia nigra, pontine nucleus and the granule cell layer of cerebellum. Highly expressed in astrocytes and non-myelinating Schwann cells. Also expressed in kidney, localizing to the proximal brush border of the renal tube.

Its subcellular location is the cell membrane. The enzyme catalyses Release of an unsubstituted, C-terminal glutamyl residue, typically from Ac-Asp-Glu or folylpoly-gamma-glutamates.. Its activity is regulated as follows. The NAALADase activity is inhibited by beta-NAAG, quisqualic acid and 2-(phosphonomethyl)glutaric acid (PMG). In terms of biological role, has both folate hydrolase and N-acetylated-alpha-linked-acidic dipeptidase (NAALADase) activity. Has a preference for tri-alpha-glutamate peptides. In the intestine, required for the uptake of folate. In the brain, modulates excitatory neurotransmission through the hydrolysis of the neuropeptide, N-aceylaspartylglutamate (NAAG), thereby releasing glutamate. Functionally, also exhibits a dipeptidyl-peptidase IV type activity. In vitro, cleaves Gly-Pro-AMC. The chain is Glutamate carboxypeptidase 2 (Folh1) from Rattus norvegicus (Rat).